Reading from the N-terminus, the 467-residue chain is Retinoic acid receptor RXR-gamma (467 aa).

Residues 1–142 (MYGNYPHFIK…TSPGSLAKHI (142 aa)) are modulating. NR C4-type zinc fingers lie at residues 143 to 163 (CAICGDRSSGKHYGVYSCEGC) and 179 to 203 (CRDNKDCLIDKRQRNRCQYCRYQKC). The nuclear receptor DNA-binding region spans 143–208 (CAICGDRSSG…RYQKCLAMGM (66 aa)). The tract at residues 209-232 (KREAVQEERQGSRERSENEAESTS) is hinge. Residues 214-226 (QEERQGSRERSEN) show a composition bias toward basic and acidic residues. The interval 214-237 (QEERQGSRERSENEAESTSGGSED) is disordered. The NR LBD domain occupies 235 to 463 (SEDMPVERIL…TFLMEMLETP (229 aa)).

Belongs to the nuclear hormone receptor family. NR2 subfamily. In terms of assembly, homodimer. Heterodimer; with a RAR molecule. Binds DNA preferentially as a RAR/RXR heterodimer. In terms of tissue distribution, isoform 1 is highly expressed inliver. Isoform 2 is abundantly expressed in eye and dorsal root ganglia.

The protein localises to the nucleus. Functionally, receptor for retinoic acid. Retinoic acid receptors bind as heterodimers to their target response elements in response to their ligands, all-trans or 9-cis retinoic acid, and regulate gene expression in various biological processes. The RAR/RXR heterodimers bind to the retinoic acid response elements (RARE) composed of tandem 5'-AGGTCA-3' sites known as DR1-DR5. The high affinity ligand for RXRs is 9-cis retinoic acid. The protein is Retinoic acid receptor RXR-gamma (RXRG) of Gallus gallus (Chicken).